The primary structure comprises 470 residues: Peripherin (470 aa).

The tract at residues 1–99 (MSHHPSGLRA…FLATRSNEKQ (99 aa)) is head. A 3'-nitrotyrosine modification is found at Tyr17. Phosphoserine is present on residues Ser28, Ser50, and Ser59. Residues 97 to 407 (EKQELQELND…KLLEGEESRI (311 aa)) enclose the IF rod domain. Residues 100–132 (ELQELNDRFANFIEKVRFLEQQNAALRGELSQA) are coil 1A. The linker 1 stretch occupies residues 133–143 (RGQEPARADQL). Residues 144–239 (CQQELRELRR…KLHEEELRDL (96 aa)) form a coil 1B region. Positions 240-262 (QVSVESQQVQQVEVEATVKPELT) are linker 2. Positions 263 to 405 (AALRDIRAQY…YRKLLEGEES (143 aa)) are coil 2. Tyr379 bears the 3'-nitrotyrosine mark. The tract at residues 406–470 (RISVPVHSFA…ELDKSSAHSY (65 aa)) is tail. The interval 447-470 (NGEVVTESQKEQRSELDKSSAHSY) is disordered. Over residues 454–470 (SQKEQRSELDKSSAHSY) the composition is skewed to basic and acidic residues. Phosphotyrosine is present on Tyr470.

This sequence belongs to the intermediate filament family. In terms of assembly, forms homodimers (in vitro). Homopolymerizes into a filamentous network (in vitro). Forms heterodimers with NEFL, NEFM or NEFH (in vitro). Interacts with DST (via C-terminus). Interacts with RAB7A; the interaction is direct. Interacts with PRKCE (via phorbol-ester/DAG-type 2 domain). Phosphorylated; phosphorylation increases after nerve injury in regenerating neurons. In terms of tissue distribution, expressed in the neurons of the outer hair cells in the organ of Corti and to a lesser extent in type I spiral ganglion cells.

It localises to the cytoplasm. The protein localises to the cytoskeleton. The protein resides in the cell projection. It is found in the axon. Its subcellular location is the perikaryon. Class-III neuronal intermediate filament protein. May form an independent structural network without the involvement of other neurofilaments or may cooperate with the neuronal intermediate filament proteins NEFL, NEFH, NEFM and INA to form a filamentous network. Assembly of the neuronal intermediate filaments may be regulated by RAB7A. Plays a role in the development of unmyelinated sensory neurons. May be involved in axon elongation and axon regeneration after injury. Inhibits neurite extension in type II spiral ganglion neurons in the cochlea. In Homo sapiens (Human), this protein is Peripherin (PRPH).